Reading from the N-terminus, the 537-residue chain is Cytochrome P450 monooxygenase yanC (537 aa).

The N-terminal stretch at 1 to 21 (MALVHLTALAACGLLLVILRA) is a signal peptide. Residue Cys-449 participates in heme binding.

It belongs to the cytochrome P450 family. The cofactor is heme.

Its pathway is secondary metabolite biosynthesis; terpenoid biosynthesis. Cytochrome P450 monooxygenase; part of the gene cluster that mediates the biosynthesis of yanuthone D, a fungal isoprenoid epoxycyclohexenone that acts as an antibiotic against fungi and bacteria. The first step of the pathway is the synthesis of 6-methylsalicylic acid (6-MSA) by the polyketide synthase yanA. 6-MSA is then converted to m-cresol by the decarboxylase yanB. The cytochrome P450 monooxygenase yanC then catalyzes the oxidation of m-cresol to toluquinol. Epoxidation of toluquinol is then performed by the short chain dehydrogenase yanD, with the help of yanE, and a further prenylation by yanG leads to 7-deacetoxyyanuthone A. The next step is the hydroxylation of C-22 of 7-deacetoxyyanuthone A by the cytochrome P450 monooxygenase yanH to yield 22-deacetylyanuthone A. O-Mevalon transferase yanI then attaches mevalon to the hydroxyl group of 22-deacetylyanuthone A to produce yanuthone E. Finally, the FAD-dependent monooxygenase yanF oxidizes the hydroxyl group at C15 of yanuthone E to form yanuthone D. Furthermore, several branching points in the pathway lead to the production of yanuthones F and G from 7-deacetoxyyanuthone A; yanuthones H and I from 22-deacetylyanuthone A; and yanuthone J from yanuthone E. YanC is also involved in the synthesis of yanuthone X1 which does not have 6-methylsalicylic acid (6-MSA) as precursor. This chain is Cytochrome P450 monooxygenase yanC, found in Aspergillus niger (strain ATCC 1015 / CBS 113.46 / FGSC A1144 / LSHB Ac4 / NCTC 3858a / NRRL 328 / USDA 3528.7).